We begin with the raw amino-acid sequence, 332 residues long: NADH-quinone oxidoreductase subunit H (332 aa).

9 helical membrane passes run 4–24 (FAFFALEALIKCIIIIAIFAS), 44–64 (IGPDMVGPFGLIQLVADMIKL), 78–98 (FIFAIAPLISAICAFVSLAAI), 120–140 (VALLFVIGTSGLCFYAVFLGG), 165–185 (VGALALIAIVMLVGSFSLVDI), 194–214 (FSWLIFKQPLAFVLFIIALFI), 255–275 (IAGAILVTLLFLGGFNSFWII), 279–299 (IMMIVKSSFIFFWYFWARAAF), and 312–332 (YLILIPLAVLNLLITALAVLL).

It belongs to the complex I subunit 1 family. As to quaternary structure, NDH-1 is composed of 14 different subunits. Subunits NuoA, H, J, K, L, M, N constitute the membrane sector of the complex.

The protein resides in the cell inner membrane. The enzyme catalyses a quinone + NADH + 5 H(+)(in) = a quinol + NAD(+) + 4 H(+)(out). In terms of biological role, NDH-1 shuttles electrons from NADH, via FMN and iron-sulfur (Fe-S) centers, to quinones in the respiratory chain. The immediate electron acceptor for the enzyme in this species is believed to be ubiquinone. Couples the redox reaction to proton translocation (for every two electrons transferred, four hydrogen ions are translocated across the cytoplasmic membrane), and thus conserves the redox energy in a proton gradient. This subunit may bind ubiquinone. In Campylobacter jejuni subsp. jejuni serotype O:6 (strain 81116 / NCTC 11828), this protein is NADH-quinone oxidoreductase subunit H.